A 332-amino-acid chain; its full sequence is Capsular polysaccharide phosphotransferase WcwK (332 aa).

This sequence belongs to the stealth family.

The polypeptide is Capsular polysaccharide phosphotransferase WcwK (wcwK) (Streptococcus pneumoniae).